The primary structure comprises 340 residues: tRNA N6-adenosine threonylcarbamoyltransferase (340 aa).

The Fe cation site is built by His-109 and His-113. Residues 132–136, Asp-165, Gly-178, and Asn-277 each bind substrate; that span reads AISGA. A Fe cation-binding site is contributed by Asp-302.

It belongs to the KAE1 / TsaD family. It depends on Fe(2+) as a cofactor.

It localises to the cytoplasm. It catalyses the reaction L-threonylcarbamoyladenylate + adenosine(37) in tRNA = N(6)-L-threonylcarbamoyladenosine(37) in tRNA + AMP + H(+). Required for the formation of a threonylcarbamoyl group on adenosine at position 37 (t(6)A37) in tRNAs that read codons beginning with adenine. Is involved in the transfer of the threonylcarbamoyl moiety of threonylcarbamoyl-AMP (TC-AMP) to the N6 group of A37, together with TsaE and TsaB. TsaD likely plays a direct catalytic role in this reaction. The sequence is that of tRNA N6-adenosine threonylcarbamoyltransferase from Chlamydia muridarum (strain MoPn / Nigg).